The following is a 115-amino-acid chain: NAD(P)H-quinone oxidoreductase subunit M (115 aa).

Belongs to the complex I NdhM subunit family. In terms of assembly, NDH-1 can be composed of about 15 different subunits; different subcomplexes with different compositions have been identified which probably have different functions.

The protein localises to the cellular thylakoid membrane. It catalyses the reaction a plastoquinone + NADH + (n+1) H(+)(in) = a plastoquinol + NAD(+) + n H(+)(out). The catalysed reaction is a plastoquinone + NADPH + (n+1) H(+)(in) = a plastoquinol + NADP(+) + n H(+)(out). In terms of biological role, NDH-1 shuttles electrons from an unknown electron donor, via FMN and iron-sulfur (Fe-S) centers, to quinones in the respiratory and/or the photosynthetic chain. The immediate electron acceptor for the enzyme in this species is believed to be plastoquinone. Couples the redox reaction to proton translocation, and thus conserves the redox energy in a proton gradient. Cyanobacterial NDH-1 also plays a role in inorganic carbon-concentration. This Prochlorococcus marinus (strain MIT 9215) protein is NAD(P)H-quinone oxidoreductase subunit M.